The following is a 306-amino-acid chain: Homoserine O-acetyltransferase (306 aa).

The Acyl-thioester intermediate role is filled by Cys-142. Residues Lys-163 and Ser-192 each coordinate substrate. The active-site Proton acceptor is the His-235. The active site involves Glu-237. A substrate-binding site is contributed by Arg-249.

It belongs to the MetA family.

It is found in the cytoplasm. The catalysed reaction is L-homoserine + acetyl-CoA = O-acetyl-L-homoserine + CoA. The protein operates within amino-acid biosynthesis; L-methionine biosynthesis via de novo pathway; O-acetyl-L-homoserine from L-homoserine: step 1/1. In terms of biological role, transfers an acetyl group from acetyl-CoA to L-homoserine, forming acetyl-L-homoserine. The chain is Homoserine O-acetyltransferase from Brevibacillus brevis (strain 47 / JCM 6285 / NBRC 100599).